The sequence spans 630 residues: 1-deoxy-D-xylulose-5-phosphate synthase (630 aa).

Thiamine diphosphate-binding positions include histidine 72 and 113–115 (GHS). Aspartate 144 serves as a coordination point for Mg(2+). Residues 145 to 146 (GA), asparagine 173, tyrosine 284, and glutamate 367 each bind thiamine diphosphate. Asparagine 173 serves as a coordination point for Mg(2+).

This sequence belongs to the transketolase family. DXPS subfamily. In terms of assembly, homodimer. It depends on Mg(2+) as a cofactor. Thiamine diphosphate is required as a cofactor.

The catalysed reaction is D-glyceraldehyde 3-phosphate + pyruvate + H(+) = 1-deoxy-D-xylulose 5-phosphate + CO2. Its pathway is metabolic intermediate biosynthesis; 1-deoxy-D-xylulose 5-phosphate biosynthesis; 1-deoxy-D-xylulose 5-phosphate from D-glyceraldehyde 3-phosphate and pyruvate: step 1/1. Catalyzes the acyloin condensation reaction between C atoms 2 and 3 of pyruvate and glyceraldehyde 3-phosphate to yield 1-deoxy-D-xylulose-5-phosphate (DXP). In Bacillus cereus (strain AH187), this protein is 1-deoxy-D-xylulose-5-phosphate synthase.